We begin with the raw amino-acid sequence, 278 residues long: Ankyrin repeat and SOCS box protein 13 (278 aa).

ANK repeat units lie at residues 18–47, 51–80, 84–113, 116–145, 149–178, and 181–210; these read VERTPVHEAAQRGESLQLQQLIESGACVNQ, DSITPLHAASLQGQARCVQLLLAAGAQVDA, DGSTPLCDACASGSIECVKLLLSYGAKVNP, YTASPLHEACMSGSSECVRLLIDVGANLEA, HFGTPLHVACAREHLDCVKVLLNAGANVNA, and LHETALHHAAKVKNVDLIEMLIEFGGNIYA. The SOCS box domain maps to 229–278; the sequence is AKCFEYYEKTPLTLSQLCRVNLRKATGVRGLEKIAKLNIPPRLIDYLSYN.

It belongs to the ankyrin SOCS box (ASB) family.

Its pathway is protein modification; protein ubiquitination. May be a substrate-recognition component of a SCF-like ECS (Elongin-Cullin-SOCS-box protein) E3 ubiquitin-protein ligase complex which mediates the ubiquitination and subsequent proteasomal degradation of target proteins. In Homo sapiens (Human), this protein is Ankyrin repeat and SOCS box protein 13 (ASB13).